The primary structure comprises 400 residues: NADH-quinone oxidoreductase subunit D (400 aa).

This sequence belongs to the complex I 49 kDa subunit family. As to quaternary structure, NDH-1 is composed of 14 different subunits. Subunits NuoB, C, D, E, F, and G constitute the peripheral sector of the complex.

It is found in the cell inner membrane. It carries out the reaction a quinone + NADH + 5 H(+)(in) = a quinol + NAD(+) + 4 H(+)(out). In terms of biological role, NDH-1 shuttles electrons from NADH, via FMN and iron-sulfur (Fe-S) centers, to quinones in the respiratory chain. The immediate electron acceptor for the enzyme in this species is believed to be a menaquinone. Couples the redox reaction to proton translocation (for every two electrons transferred, four hydrogen ions are translocated across the cytoplasmic membrane), and thus conserves the redox energy in a proton gradient. In Chlorobaculum tepidum (strain ATCC 49652 / DSM 12025 / NBRC 103806 / TLS) (Chlorobium tepidum), this protein is NADH-quinone oxidoreductase subunit D.